Reading from the N-terminus, the 159-residue chain is Ribosomal RNA large subunit methyltransferase H (159 aa).

Residues L76, G107, and 126–131 (LSKLTM) each bind S-adenosyl-L-methionine.

The protein belongs to the RNA methyltransferase RlmH family. Homodimer.

It localises to the cytoplasm. The catalysed reaction is pseudouridine(1915) in 23S rRNA + S-adenosyl-L-methionine = N(3)-methylpseudouridine(1915) in 23S rRNA + S-adenosyl-L-homocysteine + H(+). Its function is as follows. Specifically methylates the pseudouridine at position 1915 (m3Psi1915) in 23S rRNA. The protein is Ribosomal RNA large subunit methyltransferase H of Acinetobacter baumannii (strain SDF).